The following is a 563-amino-acid chain: Phosphomethylpyrimidine synthase (563 aa).

Substrate-binding positions include Asn-180, Met-209, Tyr-238, His-274, 294–296 (SRG), 335–338 (DGLR), and Glu-374. His-378 is a binding site for Zn(2+). Substrate is bound at residue Tyr-401. Residue His-442 participates in Zn(2+) binding. [4Fe-4S] cluster-binding residues include Cys-522, Cys-525, and Cys-530.

The protein belongs to the ThiC family. Requires [4Fe-4S] cluster as cofactor.

It carries out the reaction 5-amino-1-(5-phospho-beta-D-ribosyl)imidazole + S-adenosyl-L-methionine = 4-amino-2-methyl-5-(phosphooxymethyl)pyrimidine + CO + 5'-deoxyadenosine + formate + L-methionine + 3 H(+). It participates in cofactor biosynthesis; thiamine diphosphate biosynthesis. In terms of biological role, catalyzes the synthesis of the hydroxymethylpyrimidine phosphate (HMP-P) moiety of thiamine from aminoimidazole ribotide (AIR) in a radical S-adenosyl-L-methionine (SAM)-dependent reaction. The sequence is that of Phosphomethylpyrimidine synthase from Geobacillus thermodenitrificans (strain NG80-2).